Consider the following 372-residue polypeptide: MPLPDFHVSEPFTLGIELEMQVVNPPGYDLSQDSSMLIDAVKNKITAGEVKHDITESMLELATDVCRDINQAAGQFSAMQKVVLQAAADHHLEICGGGTHPFQKWQRQEVCDNERYQRTLQNFGYLIQQATVFGQHVHVGCASGDDAIYLLHGLSRFVPHFIALSAASPYMQGTDTRFASSRPNIFSAFPDNGPMPWVSNWQQFEALFRCLSYTTMIDSIKDLHWDIRPSPHFGTVEVRVMDTPLTLSHAVNMAGLIQATAHWLLTERPFKHQEKDYLLYKFNRFQACRYGLEGVITDPHTGDRRSLTEATLRLLEKITPSAHKIGASSAIEALHRQVVSGLNEAQLMRDFVADGGSLIGLVKKHCEIWAGE.

It belongs to the glutamate--cysteine ligase type 2 family. YbdK subfamily. In terms of assembly, homodimer.

It catalyses the reaction L-cysteine + L-glutamate + ATP = gamma-L-glutamyl-L-cysteine + ADP + phosphate + H(+). ATP-dependent carboxylate-amine ligase which exhibits weak glutamate--cysteine ligase activity. The protein is Putative glutamate--cysteine ligase 2 (ybdK) of Escherichia coli O6:H1 (strain CFT073 / ATCC 700928 / UPEC).